The following is a 943-amino-acid chain: Isoleucine--tRNA ligase (943 aa).

The 'HIGH' region signature appears at 58 to 68; that stretch reads PYANGKIHIGH. E567 contributes to the L-isoleucyl-5'-AMP binding site. Positions 608–612 match the 'KMSKS' region motif; that stretch reads KMSKS. K611 provides a ligand contact to ATP. Zn(2+) contacts are provided by C906, C909, C926, and C929.

It belongs to the class-I aminoacyl-tRNA synthetase family. IleS type 1 subfamily. As to quaternary structure, monomer. The cofactor is Zn(2+).

The protein resides in the cytoplasm. It catalyses the reaction tRNA(Ile) + L-isoleucine + ATP = L-isoleucyl-tRNA(Ile) + AMP + diphosphate. Functionally, catalyzes the attachment of isoleucine to tRNA(Ile). As IleRS can inadvertently accommodate and process structurally similar amino acids such as valine, to avoid such errors it has two additional distinct tRNA(Ile)-dependent editing activities. One activity is designated as 'pretransfer' editing and involves the hydrolysis of activated Val-AMP. The other activity is designated 'posttransfer' editing and involves deacylation of mischarged Val-tRNA(Ile). This is Isoleucine--tRNA ligase from Pseudomonas putida (strain W619).